The following is a 481-amino-acid chain: MQFRRYEDLRSKLLSRELTCEQVISEYLQRIDSKKDDNIFTAVFHEAALERARELDAKLERGEEPGVLFGMPIAIKDNISMKGAPLSCASKILDGYESVYDATAIERMVAEDAIFVGRTNMDEFAMGSSNENSAIGPVPNPFDKTRVPGGSSGGSAAAVANDLCMVALGSDTGGSVRQPGGFCNVVGLKPTYGRISRYGLVAFASSFDQIGVLAANCDDAALVLGVIAGQDDRDATSSHHEVPDYESTMDHVSLEGLRVGVPSAFFPENLNADVAGVVKAGLKKLEDAGAELVEIELPESDYAIAAYYILVTAEASSNLARFDGARYGYRSPDSPDLSSMYVNSRTEGFGAEVKRRIMLGTYVLSAGYYDTYYKKAQQVRRVFQEKYREAFEKVDVIAGPTSPFPPFGIGDKMDNPLEMYLADVFTVPASIVGMPAVSVPVGFDSLGLPVGVHLICNFFEEGKMLGIARNLQALCQTAPSN.

Catalysis depends on charge relay system residues K76 and S151. The active-site Acyl-ester intermediate is the S175.

This sequence belongs to the amidase family. GatA subfamily. As to quaternary structure, heterotrimer of A, B and C subunits.

It catalyses the reaction L-glutamyl-tRNA(Gln) + L-glutamine + ATP + H2O = L-glutaminyl-tRNA(Gln) + L-glutamate + ADP + phosphate + H(+). Allows the formation of correctly charged Gln-tRNA(Gln) through the transamidation of misacylated Glu-tRNA(Gln) in organisms which lack glutaminyl-tRNA synthetase. The reaction takes place in the presence of glutamine and ATP through an activated gamma-phospho-Glu-tRNA(Gln). The sequence is that of Glutamyl-tRNA(Gln) amidotransferase subunit A from Chlorobaculum parvum (strain DSM 263 / NCIMB 8327) (Chlorobium vibrioforme subsp. thiosulfatophilum).